Here is a 575-residue protein sequence, read N- to C-terminus: Interleukin-10 receptor subunit alpha (575 aa).

An N-terminal signal peptide occupies residues 1 to 16 (MLSRLLPFLVTISSLS). Over 17–241 (LEFIAYGTEL…QYFTVTNLSI (225 aa)) the chain is Extracellular. Residues N50, N66, N113, and N182 are each glycosylated (N-linked (GlcNAc...) asparagine). An intrachain disulfide couples C204 to C225. N238 carries an N-linked (GlcNAc...) asparagine glycan. Residues 242-262 (LVISMLLFCGILVCLVLQWYI) traverse the membrane as a helical segment. Over 263 to 575 (RHPGKLPTVL…PLISSLQVEE (313 aa)) the chain is Cytoplasmic. Phosphotyrosine occurs at positions 443 and 493.

The protein belongs to the type II cytokine receptor family. As to quaternary structure, interacts with IL10. Interacts with IL10RB. Interacts (via its cytoplasmic domain) with JAK1 (via N-terminus). Interacts with BTRC; this interaction leads to IL10RA ubiquitination and subsequent degradation. Interacts with STAT3. In terms of processing, phosphorylated. Phosphorylation of the cytoplasmic tail induced STAT3 activation. Post-translationally, ubiquitinated by BTRC; ubiquitination leads to endocytosis and subsequent degradation of IL10RA.

It is found in the cell membrane. The protein localises to the cytoplasm. Cell surface receptor for the cytokine IL10 that participates in IL10-mediated anti-inflammatory functions, limiting excessive tissue disruption caused by inflammation. Upon binding to IL10, induces a conformational change in IL10RB, allowing IL10RB to bind IL10 as well. In turn, the heterotetrameric assembly complex, composed of two subunits of IL10RA and IL10RB, activates the kinases JAK1 and TYK2 that are constitutively associated with IL10RA and IL10RB respectively. These kinases then phosphorylate specific tyrosine residues in the intracellular domain in IL10RA leading to the recruitment and subsequent phosphorylation of STAT3. Once phosphorylated, STAT3 homodimerizes, translocates to the nucleus and activates the expression of anti-inflammatory genes. In addition, IL10RA-mediated activation of STAT3 inhibits starvation-induced autophagy. This is Interleukin-10 receptor subunit alpha (Il10ra) from Mus musculus (Mouse).